We begin with the raw amino-acid sequence, 104 residues long: Pyrimidine/purine nucleoside phosphorylase (104 aa).

It belongs to the nucleoside phosphorylase PpnP family.

It carries out the reaction a purine D-ribonucleoside + phosphate = a purine nucleobase + alpha-D-ribose 1-phosphate. It catalyses the reaction adenosine + phosphate = alpha-D-ribose 1-phosphate + adenine. The catalysed reaction is cytidine + phosphate = cytosine + alpha-D-ribose 1-phosphate. The enzyme catalyses guanosine + phosphate = alpha-D-ribose 1-phosphate + guanine. It carries out the reaction inosine + phosphate = alpha-D-ribose 1-phosphate + hypoxanthine. It catalyses the reaction thymidine + phosphate = 2-deoxy-alpha-D-ribose 1-phosphate + thymine. The catalysed reaction is uridine + phosphate = alpha-D-ribose 1-phosphate + uracil. The enzyme catalyses xanthosine + phosphate = alpha-D-ribose 1-phosphate + xanthine. Functionally, catalyzes the phosphorolysis of diverse nucleosides, yielding D-ribose 1-phosphate and the respective free bases. Can use uridine, adenosine, guanosine, cytidine, thymidine, inosine and xanthosine as substrates. Also catalyzes the reverse reactions. This is Pyrimidine/purine nucleoside phosphorylase from Thiobacillus denitrificans (strain ATCC 25259 / T1).